We begin with the raw amino-acid sequence, 210 residues long: Probable GTP-binding protein EngB (210 aa).

In terms of domain architecture, EngB-type G spans 25 to 199 (RGIEVAFAGR…RQKLDSWFSE (175 aa)). Residues 33–40 (GRSNAGKS), 60–64 (GRTQL), 78–81 (DLPG), 145–148 (TKAD), and 178–180 (FSS) each bind GTP. Mg(2+) contacts are provided by serine 40 and threonine 62.

This sequence belongs to the TRAFAC class TrmE-Era-EngA-EngB-Septin-like GTPase superfamily. EngB GTPase family. Requires Mg(2+) as cofactor.

Functionally, necessary for normal cell division and for the maintenance of normal septation. The chain is Probable GTP-binding protein EngB from Salmonella paratyphi B (strain ATCC BAA-1250 / SPB7).